We begin with the raw amino-acid sequence, 140 residues long: Large ribosomal subunit protein mL43 (140 aa).

The protein belongs to the mitochondrion-specific ribosomal protein mL43 family. As to quaternary structure, component of the mitochondrial large ribosomal subunit (mt-LSU). Mature yeast 74S mitochondrial ribosomes consist of a small (37S) and a large (54S) subunit. The 37S small subunit contains a 15S ribosomal RNA (15S mt-rRNA) and 34 different proteins. The 54S large subunit contains a 21S rRNA (21S mt-rRNA) and 46 different proteins.

The protein localises to the mitochondrion. In terms of biological role, component of the mitochondrial ribosome (mitoribosome), a dedicated translation machinery responsible for the synthesis of mitochondrial genome-encoded proteins, including at least some of the essential transmembrane subunits of the mitochondrial respiratory chain. The mitoribosomes are attached to the mitochondrial inner membrane and translation products are cotranslationally integrated into the membrane. Also has an extraribosomal function, being essential for mitochondrial genome integrity. May interact with MHR1 to take part in the mtDNA repair mechanism. This is Large ribosomal subunit protein mL43 (MRPL51) from Saccharomyces cerevisiae (strain ATCC 204508 / S288c) (Baker's yeast).